The chain runs to 320 residues: Lipoyl synthase (320 aa).

The disordered stretch occupies residues 1–26; that stretch reads MVTVVDRVTSRRLRHPEKMHRPDTSI. [4Fe-4S] cluster is bound by residues C59, C64, C70, C85, C89, C92, and S298. Positions 71–287 constitute a Radical SAM core domain; the sequence is WSQRHASFMI…AKIGKVKGFL (217 aa).

The protein belongs to the radical SAM superfamily. Lipoyl synthase family. Requires [4Fe-4S] cluster as cofactor.

The protein localises to the cytoplasm. The catalysed reaction is [[Fe-S] cluster scaffold protein carrying a second [4Fe-4S](2+) cluster] + N(6)-octanoyl-L-lysyl-[protein] + 2 oxidized [2Fe-2S]-[ferredoxin] + 2 S-adenosyl-L-methionine + 4 H(+) = [[Fe-S] cluster scaffold protein] + N(6)-[(R)-dihydrolipoyl]-L-lysyl-[protein] + 4 Fe(3+) + 2 hydrogen sulfide + 2 5'-deoxyadenosine + 2 L-methionine + 2 reduced [2Fe-2S]-[ferredoxin]. It participates in protein modification; protein lipoylation via endogenous pathway; protein N(6)-(lipoyl)lysine from octanoyl-[acyl-carrier-protein]: step 2/2. Functionally, catalyzes the radical-mediated insertion of two sulfur atoms into the C-6 and C-8 positions of the octanoyl moiety bound to the lipoyl domains of lipoate-dependent enzymes, thereby converting the octanoylated domains into lipoylated derivatives. In Bartonella quintana (strain Toulouse) (Rochalimaea quintana), this protein is Lipoyl synthase.